A 222-amino-acid polypeptide reads, in one-letter code: Cytidylate kinase (222 aa).

Residue 12-20 (GPSGAGKGT) participates in ATP binding.

It belongs to the cytidylate kinase family. Type 1 subfamily.

It is found in the cytoplasm. The enzyme catalyses CMP + ATP = CDP + ADP. It carries out the reaction dCMP + ATP = dCDP + ADP. The chain is Cytidylate kinase from Methylococcus capsulatus (strain ATCC 33009 / NCIMB 11132 / Bath).